The chain runs to 854 residues: Valine--tRNA ligase (854 aa).

The 'HIGH' region motif lies at 46-56; that stretch reads PTVSGDLHIGH. The 'KMSKS' region signature appears at 551 to 555; it reads KMSKS. Lysine 554 contacts ATP.

The protein belongs to the class-I aminoacyl-tRNA synthetase family. ValS type 2 subfamily. Monomer.

The protein resides in the cytoplasm. It carries out the reaction tRNA(Val) + L-valine + ATP = L-valyl-tRNA(Val) + AMP + diphosphate. Its function is as follows. Catalyzes the attachment of valine to tRNA(Val). As ValRS can inadvertently accommodate and process structurally similar amino acids such as threonine, to avoid such errors, it has a 'posttransfer' editing activity that hydrolyzes mischarged Thr-tRNA(Val) in a tRNA-dependent manner. The chain is Valine--tRNA ligase from Orientia tsutsugamushi (strain Boryong) (Rickettsia tsutsugamushi).